Reading from the N-terminus, the 303-residue chain is MTVTQTNLDGILPLVARGKVRDIYQVDDNMLLFVATDRISAYDVIMENGIKDKGKILTQLSVFWFNLLSDVIPNHLVASSDKDIFAKLPEQLSEPKYKAQLAGRSLLVKKHKLVPLEAIVRGYITGSAWKEYKKSSTVHGLPVKSGLQESEAFEKPIFTPSTKAEQGQHDENISPEQAAQLVGEELCAEVAQKAIALYSKARDYALSRGIILADTKFEFGLNENNELVLVDEVLTPDSSRFWDAKKYELGRSQESFDKQFLRDWLTSHQLNGKEGVSMTEEIAAKTAAKYKEAYEALTGKTWA.

Belongs to the SAICAR synthetase family.

The catalysed reaction is 5-amino-1-(5-phospho-D-ribosyl)imidazole-4-carboxylate + L-aspartate + ATP = (2S)-2-[5-amino-1-(5-phospho-beta-D-ribosyl)imidazole-4-carboxamido]succinate + ADP + phosphate + 2 H(+). Its pathway is purine metabolism; IMP biosynthesis via de novo pathway; 5-amino-1-(5-phospho-D-ribosyl)imidazole-4-carboxamide from 5-amino-1-(5-phospho-D-ribosyl)imidazole-4-carboxylate: step 1/2. In Pichia angusta (Yeast), this protein is Phosphoribosylaminoimidazole-succinocarboxamide synthase (ADE1).